The sequence spans 86 residues: Cell division topological specificity factor (86 aa).

This sequence belongs to the MinE family.

Functionally, prevents the cell division inhibition by proteins MinC and MinD at internal division sites while permitting inhibition at polar sites. This ensures cell division at the proper site by restricting the formation of a division septum at the midpoint of the long axis of the cell. In Azoarcus sp. (strain BH72), this protein is Cell division topological specificity factor.